Here is a 381-residue protein sequence, read N- to C-terminus: Cytochrome b (381 aa).

Helical transmembrane passes span Phe-34–Met-54, Trp-78–Ile-99, Trp-114–Leu-134, and Phe-179–Leu-199. The heme b site is built by His-84 and His-98. The heme b site is built by His-183 and His-197. His-202 lines the a ubiquinone pocket. The next 4 helical transmembrane spans lie at Tyr-227–Met-247, Leu-289–His-309, Leu-321–Gly-341, and Phe-348–Pro-368.

It belongs to the cytochrome b family. In terms of assembly, the cytochrome bc1 complex contains 3 respiratory subunits (MT-CYB, CYC1 and UQCRFS1), 2 core proteins (UQCRC1 and UQCRC2) and probably 6 low-molecular weight proteins. Heme b serves as cofactor.

The protein resides in the mitochondrion inner membrane. Functionally, component of the ubiquinol-cytochrome c reductase complex (complex III or cytochrome b-c1 complex) that is part of the mitochondrial respiratory chain. The b-c1 complex mediates electron transfer from ubiquinol to cytochrome c. Contributes to the generation of a proton gradient across the mitochondrial membrane that is then used for ATP synthesis. The sequence is that of Cytochrome b (mt-cyb) from Sphyrna tiburo vespertina (Pacific bonnethead shark).